A 512-amino-acid polypeptide reads, in one-letter code: MFIESFKVESPNVKYTENEIESVYNYDTTELVHENRKDAGGYQWIVKPKTVQYHFKTDTRVPKLGVMLVGWGGNNGSTLTGGVIANREGISWATKDKIQQANYFGSLTQASSIRVGSFNGEEIYAPFKSLLPMVNPDDVVFGGWDISDMNLADAMTRARVFDIDLQKQLRPYMEHMVPLPGIYDPDFIAANQGSRANNVIKGTKKEQVERVIKDIREFKEKNKVDKVVVLWTGNTERYSNVVVGLNDTMENLLASLEKNESEISPSTSYALACIEENIPFINGSPQNTFVPGLIDLAIKKNSLIGGDDFKSGQTKMKSVLVDFLVGAGIKPTSIVSYNHLGNNDGMNLSAPQTFRSKEISKSNVVDDMVASNGILYEPGEHPDHVVVIKYVPYVGDSKRAMDEYTSEIFMGGTNTIVMHNTCEDSLLAAPIILDLVLLAELSTRIQLKAEEEDKFHSFHPVATILSYLTKAPLVPPGTPVVNALSKQRAMLENILRACVGLAPENNMILEYK.

The NAD(+) site is built by G72, G73, N74, N75, D145, I182, Q192, R195, T232, G233, N234, T235, G283, S284, D308, S311, N342, N343, D344, K357, G395, D396, D424, and S425.

Belongs to the myo-inositol 1-phosphate synthase family. NAD(+) is required as a cofactor.

It localises to the cytoplasm. The protein localises to the cytosol. Its subcellular location is the nucleus. The enzyme catalyses D-glucose 6-phosphate = 1D-myo-inositol 3-phosphate. It functions in the pathway polyol metabolism; myo-inositol biosynthesis; myo-inositol from D-glucose 6-phosphate: step 1/2. Key enzyme in myo-inositol biosynthesis pathway that catalyzes the conversion of glucose 6-phosphate to 1-myo-inositol 1-phosphate in a NAD-dependent manner. This Mesembryanthemum crystallinum (Common ice plant) protein is Inositol-3-phosphate synthase.